Reading from the N-terminus, the 171-residue chain is Disulfide bond formation protein B (171 aa).

Residues 1–13 are Cytoplasmic-facing; it reads MSALTRFAQSRLA. The chain crosses the membrane as a helical span at residues 14-30; it reads WTLLLLTAVGLEACALF. At 31–48 the chain is on the periplasmic side; it reads FQHVMKLDPCVMCIYQRL. Cys40 and Cys43 are oxidised to a cystine. Residues 49–64 traverse the membrane as a helical segment; it reads AVLGVLTAGLIGVVGH. Residues 65–71 are Cytoplasmic-facing; it reads QFRLLRF. The helical transmembrane segment at 72 to 89 threads the bilayer; that stretch reads LGVLLWGVSAAWGLKLAL. The Periplasmic segment spans residues 90-144; that stretch reads ELVEMQTNPSPFSTCSFLPEFPEWMPLHEWFPSVFLPTGMCTDIPWEMFGITMSQ. The cysteines at positions 104 and 130 are disulfide-linked. The helical transmembrane segment at 145–163 threads the bilayer; that stretch reads WMVVAFSTYLIALVVFIVP. Residues 164-171 lie on the Cytoplasmic side of the membrane; that stretch reads ALMPTKKA.

This sequence belongs to the DsbB family.

The protein localises to the cell inner membrane. Functionally, required for disulfide bond formation in some periplasmic proteins. Acts by oxidizing the DsbA protein. This is Disulfide bond formation protein B from Shewanella loihica (strain ATCC BAA-1088 / PV-4).